The primary structure comprises 253 residues: 4-hydroxy-tetrahydrodipicolinate reductase (253 aa).

NAD(+) is bound by residues 8-13, D34, 76-78, and 108-111; these read GAKGRM, GTT, and APNF. The active-site Proton donor/acceptor is H138. H139 is a (S)-2,3,4,5-tetrahydrodipicolinate binding site. K142 serves as the catalytic Proton donor. 148 to 149 lines the (S)-2,3,4,5-tetrahydrodipicolinate pocket; that stretch reads GT.

The protein belongs to the DapB family.

Its subcellular location is the cytoplasm. It carries out the reaction (S)-2,3,4,5-tetrahydrodipicolinate + NAD(+) + H2O = (2S,4S)-4-hydroxy-2,3,4,5-tetrahydrodipicolinate + NADH + H(+). The enzyme catalyses (S)-2,3,4,5-tetrahydrodipicolinate + NADP(+) + H2O = (2S,4S)-4-hydroxy-2,3,4,5-tetrahydrodipicolinate + NADPH + H(+). The protein operates within amino-acid biosynthesis; L-lysine biosynthesis via DAP pathway; (S)-tetrahydrodipicolinate from L-aspartate: step 4/4. Catalyzes the conversion of 4-hydroxy-tetrahydrodipicolinate (HTPA) to tetrahydrodipicolinate. This chain is 4-hydroxy-tetrahydrodipicolinate reductase, found in Bifidobacterium animalis subsp. lactis (strain AD011).